The sequence spans 459 residues: Cysteine--tRNA ligase (459 aa).

Residue Cys29 coordinates Zn(2+). The 'HIGH' region motif lies at Pro31–Asn41. Residues Cys209, His234, and Glu238 each contribute to the Zn(2+) site. A 'KMSKS' region motif is present at residues Lys267 to Ser271. ATP is bound at residue Lys270.

The protein belongs to the class-I aminoacyl-tRNA synthetase family. In terms of assembly, monomer. It depends on Zn(2+) as a cofactor.

It is found in the cytoplasm. It catalyses the reaction tRNA(Cys) + L-cysteine + ATP = L-cysteinyl-tRNA(Cys) + AMP + diphosphate. The protein is Cysteine--tRNA ligase of Saccharophagus degradans (strain 2-40 / ATCC 43961 / DSM 17024).